A 549-amino-acid polypeptide reads, in one-letter code: Oxygen-dependent choline dehydrogenase (549 aa).

4–33 (DFVIIGSGSAGSAMAYRLSEDGRYSVIVIE) contacts FAD. Catalysis depends on histidine 465, which acts as the Proton acceptor.

Belongs to the GMC oxidoreductase family. Requires FAD as cofactor.

The enzyme catalyses choline + A = betaine aldehyde + AH2. It carries out the reaction betaine aldehyde + NAD(+) + H2O = glycine betaine + NADH + 2 H(+). It functions in the pathway amine and polyamine biosynthesis; betaine biosynthesis via choline pathway; betaine aldehyde from choline (cytochrome c reductase route): step 1/1. In terms of biological role, involved in the biosynthesis of the osmoprotectant glycine betaine. Catalyzes the oxidation of choline to betaine aldehyde and betaine aldehyde to glycine betaine at the same rate. This chain is Oxygen-dependent choline dehydrogenase, found in Brucella melitensis biotype 1 (strain ATCC 23456 / CCUG 17765 / NCTC 10094 / 16M).